The chain runs to 224 residues: Oxygen-evolving enhancer protein 3-1, chloroplastic (224 aa).

A chloroplast-targeting transit peptide spans 1–44 (MASMGGLHGASPAVLEGSLKINGSSRLNGSGRVAVAQRSRLVVR). Residues 45 to 75 (AQQSEETSRRSVIGLVAAGLAGGSFVQAVLA) constitute a thylakoid transit peptide. The residue at position 189 (Thr189) is a Phosphothreonine. At Tyr209 the chain carries Phosphotyrosine. Residue Thr212 is modified to Phosphothreonine.

The protein belongs to the PsbQ family. Expressed in green tissue, with high steady-state mRNA levels in leaves. Not expressed in roots.

The protein localises to the plastid. It localises to the chloroplast thylakoid membrane. Its function is as follows. Required for photosystem II assembly/stability and photoautotrophic growth under low light conditions. The chain is Oxygen-evolving enhancer protein 3-1, chloroplastic (PSBQ1) from Arabidopsis thaliana (Mouse-ear cress).